Here is a 577-residue protein sequence, read N- to C-terminus: Zinc finger protein 384 (577 aa).

A disordered region spans residues 171-225 (TLTEEGGGGGGGGGSVAPKPPRGRKKKRMLESGLPEMNDPYVLSPEDDDDHQKDG). Residues 175 to 185 (EGGGGGGGGGS) show a composition bias toward gly residues. Position 214 is a phosphoserine (serine 214). 8 consecutive C2H2-type zinc fingers follow at residues 228 to 250 (YRCR…SKSH), 256 to 278 (HKCP…IRIH), 284 to 306 (YSCN…TRIH), 317 to 339 (HKCP…LRIH), 345 to 367 (YNCS…TRIH), 373 to 397 (YKCA…RRQH), 403 to 425 (FKCH…LSTH), and 433 to 455 (YTCT…MRKH). The segment covering 501–515 (QQQQQQQQQQQQQQQ) has biased composition (low complexity). The disordered stretch occupies residues 501-550 (QQQQQQQQQQQQQQQQPPPHFQSPGAAPQGGGGGDSNPNPPPQCSFDLTP).

This sequence belongs to the krueppel C2H2-type zinc-finger protein family. In terms of assembly, interacts with BCAR1.

Its subcellular location is the nucleus. In terms of biological role, transcription factor that binds the consensus DNA sequence [GC]AAAAA. Seems to bind and regulate the promoters of MMP1, MMP3, MMP7 and COL1A1. In Homo sapiens (Human), this protein is Zinc finger protein 384 (ZNF384).